A 2766-amino-acid polypeptide reads, in one-letter code: Thyroglobulin (2766 aa).

The first 20 residues, 1–20 (MTALVLWVSTLLSSVCLVAA), serve as a signal peptide directing secretion. Iodotyrosine; alternate is present on tyrosine 25. Tyrosine 25 carries the post-translational modification Sulfotyrosine; alternate. A Thyroxine; alternate modification is found at tyrosine 25. Tyrosine 25 bears the Triiodothyronine; alternate mark. 4 Thyroglobulin type-1 domains span residues 32–93 (LRPC…PTVC), 94–161 (LSFC…PTRC), 162–298 (PRSC…RFRC), and 299–359 (PTKC…PPSC). Cystine bridges form between cysteine 35–cysteine 53, cysteine 64–cysteine 71, cysteine 73–cysteine 93, cysteine 97–cysteine 121, cysteine 132–cysteine 139, cysteine 141–cysteine 161, cysteine 165–cysteine 184, and cysteine 195–cysteine 236. Tyrosine 109 carries the post-translational modification Iodotyrosine. A glycan (N-linked (GlcNAc...) asparagine) is linked at asparagine 111. Residue tyrosine 150 is modified to Iodotyrosine; alternate. A Diiodotyrosine; alternate modification is found at tyrosine 150. The N-linked (GlcNAc...) asparagine glycan is linked to asparagine 199. Tyrosine 235 and tyrosine 259 each carry iodotyrosine. Cystine bridges form between cysteine 302–cysteine 320, cysteine 331–cysteine 337, cysteine 339–cysteine 359, cysteine 365–cysteine 620, cysteine 408–cysteine 608, cysteine 631–cysteine 636, cysteine 638–cysteine 658, cysteine 662–cysteine 687, and cysteine 698–cysteine 703. Residues asparagine 484 and asparagine 496 are each glycosylated (N-linked (GlcNAc...) asparagine). Thyroglobulin type-1 domains follow at residues 605-658 (AQAC…RPRC), 659-726 (PTKC…AKQC), 727-922 (PSVC…IPAC), 923-1074 (PGPC…MPQC), 1075-1146 (PTNC…SAQC), and 1147-1211 (PGLC…QPAC). Tyrosine 704 carries the iodotyrosine; alternate modification. Thyroxine; alternate is present on tyrosine 704. Tyrosine 704 bears the Triiodothyronine; alternate mark. Residue tyrosine 704 is modified to Diiodotyrosine; alternate. 16 cysteine pairs are disulfide-bonded: cysteine 705/cysteine 726, cysteine 730/cysteine 763, cysteine 774/cysteine 899, cysteine 901/cysteine 922, cysteine 926/cysteine 1032, cysteine 1043/cysteine 1050, cysteine 1052/cysteine 1074, cysteine 1078/cysteine 1109, cysteine 1127/cysteine 1146, cysteine 1150/cysteine 1170, cysteine 1182/cysteine 1189, cysteine 1191/cysteine 1211, cysteine 1216/cysteine 1265, cysteine 1232/cysteine 1246, cysteine 1306/cysteine 1356, and cysteine 1331/cysteine 1347. The N-linked (GlcNAc...) asparagine glycan is linked to asparagine 748. Iodotyrosine is present on tyrosine 785. An N-linked (GlcNAc...) asparagine glycan is attached at asparagine 817. Tyrosine 867 is subject to Iodotyrosine; alternate. Tyrosine 867 carries the diiodotyrosine; alternate modification. The residue at position 884 (tyrosine 884) is a Diiodotyrosine. A glycan (N-linked (GlcNAc...) asparagine) is linked at asparagine 948. Tyrosine 993 is subject to Iodotyrosine; alternate. Tyrosine 993 is subject to Diiodotyrosine; alternate. Asparagine 1141 carries N-linked (GlcNAc...) asparagine glycosylation. Tyrosine 1310 carries the iodotyrosine modification. A Thyroxine modification is found at tyrosine 1310. 2 N-linked (GlcNAc...) asparagine glycosylation sites follow: asparagine 1349 and asparagine 1365. Disulfide bonds link cysteine 1441-cysteine 1458, cysteine 1461-cysteine 1472, cysteine 1475-cysteine 1489, cysteine 1492-cysteine 1509, cysteine 1513-cysteine 1522, cysteine 1542-cysteine 1564, cysteine 1602-cysteine 1626, cysteine 1606-cysteine 1612, and cysteine 1638-cysteine 1661. Type II repeat units lie at residues 1455 to 1468 (ALGC…SFSQ), 1469 to 1485 (DGRC…EQAG), and 1486 to 1502 (SSAC…ITTG). One can recognise a Thyroglobulin type-1 11 domain in the interval 1510–1564 (VTDCQKNEAGLQCDQNGQYQASQKNRDSGEVFCVDSEGRKLQWLQTEAGLSESQC). The stretch at 1602 to 1722 (CLTDCANDEA…GANLTDTHTY (121 aa)) is one Type IIIA repeat. Asparagine 1715, asparagine 1729, asparagine 1773, and asparagine 1864 each carry an N-linked (GlcNAc...) asparagine glycan. Cystine bridges form between cysteine 1723–cysteine 1748, cysteine 1727–cysteine 1733, cysteine 1732–cysteine 1834, and cysteine 1759–cysteine 1776. A Type IIIB repeat occupies 1723 to 1889 (CLLACDNDSC…LFSAEQANLW (167 aa)). 7 disulfides stabilise this stretch: cysteine 1890–cysteine 1916, cysteine 1894–cysteine 1901, cysteine 1925–cysteine 1936, cysteine 1993–cysteine 2021, cysteine 1997–cysteine 2003, cysteine 2002–cysteine 2073, and cysteine 2032–cysteine 2045. A Type IIIA repeat occupies 1890-1992 (CLSRCAQEPI…GKLISNGFFE (103 aa)). N-linked (GlcNAc...) asparagine glycosylation occurs at asparagine 1935. A Type IIIB repeat occupies 1993-2125 (CERLCDRDPC…AATSNFSMAQ (133 aa)). Asparagine 2010 carries an N-linked (GlcNAc...) asparagine glycan. A glycan (N-linked (GlcNAc...) asparagine) is linked at asparagine 2120. Residues 2126–2183 (DFCLQQCSRHQDCLVTTLQIQPGVVRCVFYPDIQNCIHSLRSHTCWLLLHEEATYIYR) form a Type IIIA repeat. Intrachain disulfides connect cysteine 2128/cysteine 2152, cysteine 2132/cysteine 2138, and cysteine 2161/cysteine 2170. Position 2182 is an iodotyrosine (tyrosine 2182). The cholinesterase-like (ChEL) stretch occupies residues 2186 to 2766 (GIPLVQSDVT…LEPVPKSYSK (581 aa)). Residue asparagine 2249 is glycosylated (N-linked (GlcNAc...) asparagine). The cysteines at positions 2263 and 2280 are disulfide-linked. N-linked (GlcNAc...) asparagine glycosylation is present at asparagine 2294. A disulfide bridge links cysteine 2441 with cysteine 2452. Tyrosine 2539 bears the Thyroxine mark. Tyrosine 2572 is modified (iodotyrosine; alternate). At tyrosine 2572 the chain carries Thyroxine; alternate. Position 2572 is a triiodothyronine; alternate (tyrosine 2572). Tyrosine 2572 is subject to Diiodotyrosine; alternate. An N-linked (GlcNAc...) asparagine glycan is attached at asparagine 2581. 2 positions are modified to iodotyrosine: tyrosine 2586 and tyrosine 2616. Residues cysteine 2590 and cysteine 2714 are joined by a disulfide bond. Tyrosine 2696 carries the post-translational modification Diiodotyrosine. Positions 2729–2766 (GAKDAQLTKSEEEDLEVGPGLEEDLSGSLEPVPKSYSK) are disordered. Residues 2739 to 2753 (EEEDLEVGPGLEEDL) are compositionally biased toward acidic residues. Position 2764 is an iodotyrosine; alternate (tyrosine 2764). Tyrosine 2764 is modified (thyroxine; alternate). Tyrosine 2764 carries the post-translational modification Triiodothyronine; alternate. Tyrosine 2764 carries the diiodotyrosine; alternate modification.

This sequence belongs to the type-B carboxylesterase/lipase family. Monomer. Homodimer (via ChEL region); occurs in the endoplasmic reticulum and is required for export to the Golgi apparatus. Homooligomer; disulfide-linked; stored in this form in the thyroid follicle lumen. In terms of processing, iodinated on tyrosine residues by TPO. There are 4 pairs of iodinated tyrosines used for coupling: acceptor Tyr-25 is coupled to donor Tyr-150 or Tyr-235, acceptor Tyr-2572 is coupled to donor Tyr-2539, acceptor Tyr-2764 in monomer 1 is coupled to donor Tyr-2764 in monomer 2 and acceptor Tyr-1310 in monomer 1 is coupled to donor Tyr-109 in monomer 2. Sulfated tyrosines are desulfated during iodination. Post-translationally, undergoes sequential proteolysis by cathepsins to release thyroxine (T4) and triiodothyronine (T3) hormones. In the thyroid follicle lumen, cross-linked TG (storage form) is solubilized by limited proteolysis mediated by cathepsins CTSB and/or CTSL. Partially cleaved TG is further processed by CTSK/cathepsin K and/or CTSL resulting in the release of T4. Following endocytosis, further processing occurs leading to the release of T3 and more T4 hormones. In terms of tissue distribution, specifically expressed in the thyroid gland.

It localises to the secreted. Acts as a substrate for the production of iodinated thyroid hormones thyroxine (T4) and triiodothyronine (T3). The synthesis of T3 and T4 involves iodination of selected tyrosine residues of TG/thyroglobulin followed by their oxidative coupling. Following TG re-internalization and lysosomal-mediated proteolysis, T3 and T4 are released from the polypeptide backbone leading to their secretion into the bloodstream. One dimer produces 7 thyroid hormone molecules. The polypeptide is Thyroglobulin (Tg) (Mus musculus (Mouse)).